The chain runs to 329 residues: Prostaglandin reductase 1 (329 aa).

Residue Thr-18 is modified to Phosphothreonine. A Phosphoserine modification is found at Ser-20. NADP(+)-binding positions include 152–155 (GAVG), Lys-178, Tyr-193, Asn-217, 239–245 (CGAISTY), 270–272 (FVV), and Asn-321. Lys-178 bears the N6-(2-hydroxyisobutyryl)lysine; alternate mark. N6-acetyllysine; alternate is present on Lys-178.

The protein belongs to the NADP-dependent oxidoreductase L4BD family. In terms of assembly, monomer or homodimer. In terms of tissue distribution, high expression in the kidney, liver, and intestine but not in leukocytes.

The protein localises to the cytoplasm. The enzyme catalyses 13,14-dihydro-15-oxo-prostaglandin E1 + NADP(+) = 15-oxoprostaglandin E1 + NADPH + H(+). It carries out the reaction 13,14-dihydro-15-oxo-prostaglandin E2 + NADP(+) = 15-oxoprostaglandin E2 + NADPH + H(+). The catalysed reaction is 13,14-dihydro-15-oxo-prostaglandin F1alpha + NADP(+) = 15-oxoprostaglandin F1alpha + NADPH + H(+). It catalyses the reaction 13,14-dihydro-15-oxo-PGF2alpha + NADP(+) = 15-oxoprostaglandin F2alpha + NADPH + H(+). The enzyme catalyses leukotriene B4 + NADP(+) = 12-oxo-leukotriene B4 + NADPH + H(+). It carries out the reaction 20-hydroxy-leukotriene B4 + NADP(+) = 12-oxo-20-hydroxy-leukotriene B4 + NADPH + H(+). The catalysed reaction is 6-trans-leukotriene B4 + NADP(+) = 12-oxo-(5S)-hydroxy-(6E,8E,10E,14Z)-eicosatetraenoate + NADPH + H(+). It catalyses the reaction (5S,12S)-dihydroxy-(6E,10E,12E,14Z)-eicosatetraenoate + NADP(+) = 12-oxo-(5S)-hydroxy-(6E,8E,10E,14Z)-eicosatetraenoate + NADPH + H(+). The enzyme catalyses an n-alkanal + NADP(+) = an alk-2-enal + NADPH + H(+). It carries out the reaction hexanal + NADP(+) = (E)-hex-2-enal + NADPH + H(+). The catalysed reaction is octanal + NADP(+) = (2E)-octenal + NADPH + H(+). It catalyses the reaction decanal + NADP(+) = (2E)-decenal + NADPH + H(+). The enzyme catalyses dodecanal + NADP(+) = (2E)-dodecenal + NADPH + H(+). It carries out the reaction 4-hydroxynonanal + NADP(+) = (E)-4-hydroxynon-2-enal + NADPH + H(+). The catalysed reaction is pentan-2-one + NADP(+) = (E)-pent-3-en-2-one + NADPH + H(+). It catalyses the reaction nonan-2-one + NADP(+) = (3E)-nonen-2-one + NADPH + H(+). Functionally, NAD(P)H-dependent oxidoreductase involved in metabolic inactivation of pro- and anti-inflammatory eicosanoids: prostaglandins (PG), leukotrienes (LT) and lipoxins (LX). Catalyzes with high efficiency the reduction of the 13,14 double bond of 15-oxoPGs, including 15-oxo-PGE1, 15-oxo-PGE2, 15-oxo-PGF1-alpha and 15-oxo-PGF2-alpha. Catalyzes with lower efficiency the oxidation of the hydroxyl group at C12 of LTB4 and its derivatives, converting them into biologically less active 12-oxo-LTB4 metabolites. Reduces 15-oxo-LXA4 to 13,14 dihydro-15-oxo-LXA4, enhancing neutrophil recruitment at the inflammatory site. May play a role in metabolic detoxification of alkenals and ketones. Reduces alpha,beta-unsaturated alkenals and ketones, particularly those with medium-chain length, showing highest affinity toward (2E)-decenal and (3E)-3-nonen-2-one. May inactivate 4-hydroxy-2-nonenal, a cytotoxic lipid constituent of oxidized low-density lipoprotein particles. In Homo sapiens (Human), this protein is Prostaglandin reductase 1 (PTGR1).